Reading from the N-terminus, the 473-residue chain is Proline transporter 1 (473 aa).

Basic and acidic residues predominate over residues 1 to 11; that stretch reads MDQHQLDEENQ. A disordered region spans residues 1–31; the sequence is MDQHQLDEENQRAALFHSSAPSSSLGADGEE. The next 11 helical transmembrane spans lie at 65 to 85, 88 to 108, 145 to 165, 188 to 208, 210 to 230, 252 to 272, 290 to 310, 333 to 353, 378 to 398, 401 to 421, and 437 to 457; these read PWYQ…VLGY, SIMV…AAAI, LTWA…IILA, IALS…LSAL, IWLG…FVMS, IFTT…GMLP, LWFQ…MGYW, VANL…ASPM, VGVR…LPFL, FMSL…ANHM, and WHWL…VAAV.

The protein belongs to the amino acid/polyamine transporter 2 family. Amino acid/auxin permease (AAAP) (TC 2.A.18.3) subfamily. As to expression, expressed in roots, leaf blades and sheaths, stems and young panicle.

The protein localises to the cell membrane. Proline transporter that mediates proline transport across the plasma membrane when expressed in a heterologous system (Xenopus oocytes). The sequence is that of Proline transporter 1 (PROT1) from Oryza sativa subsp. japonica (Rice).